The sequence spans 286 residues: NAD kinase (286 aa).

D74 acts as the Proton acceptor in catalysis. Residues 74 to 75, 148 to 149, D178, A186, 189 to 194, and Q244 contribute to the NAD(+) site; these read DG, ND, and TAYNLS.

Belongs to the NAD kinase family. Requires a divalent metal cation as cofactor.

It is found in the cytoplasm. The catalysed reaction is NAD(+) + ATP = ADP + NADP(+) + H(+). Functionally, involved in the regulation of the intracellular balance of NAD and NADP, and is a key enzyme in the biosynthesis of NADP. Catalyzes specifically the phosphorylation on 2'-hydroxyl of the adenosine moiety of NAD to yield NADP. This chain is NAD kinase, found in Campylobacter jejuni subsp. jejuni serotype O:6 (strain 81116 / NCTC 11828).